The chain runs to 357 residues: N-acetyl-gamma-glutamyl-phosphate reductase (357 aa).

The active site involves Cys-160.

This sequence belongs to the NAGSA dehydrogenase family. Type 1 subfamily.

The protein resides in the cytoplasm. It catalyses the reaction N-acetyl-L-glutamate 5-semialdehyde + phosphate + NADP(+) = N-acetyl-L-glutamyl 5-phosphate + NADPH + H(+). Its pathway is amino-acid biosynthesis; L-arginine biosynthesis; N(2)-acetyl-L-ornithine from L-glutamate: step 3/4. Functionally, catalyzes the NADPH-dependent reduction of N-acetyl-5-glutamyl phosphate to yield N-acetyl-L-glutamate 5-semialdehyde. This Prochlorococcus marinus (strain MIT 9313) protein is N-acetyl-gamma-glutamyl-phosphate reductase.